The sequence spans 335 residues: Ketol-acid reductoisomerase (NADP(+)) (335 aa).

In terms of domain architecture, KARI N-terminal Rossmann spans 5-185 (SKIYTDNDAN…GATRAGVIPT (181 aa)). Residues 28 to 31 (YGSQ), serine 56, and 86 to 89 (DMVQ) contribute to the NADP(+) site. Residue histidine 111 is part of the active site. Glycine 137 is an NADP(+) binding site. The KARI C-terminal knotted domain maps to 186 to 331 (TFKEETETDL…NQLRDLVQKG (146 aa)). Mg(2+)-binding residues include aspartate 194, glutamate 198, glutamate 230, and glutamate 234. Residue serine 255 coordinates substrate.

Belongs to the ketol-acid reductoisomerase family. Mg(2+) serves as cofactor.

It carries out the reaction (2R)-2,3-dihydroxy-3-methylbutanoate + NADP(+) = (2S)-2-acetolactate + NADPH + H(+). It catalyses the reaction (2R,3R)-2,3-dihydroxy-3-methylpentanoate + NADP(+) = (S)-2-ethyl-2-hydroxy-3-oxobutanoate + NADPH + H(+). Its pathway is amino-acid biosynthesis; L-isoleucine biosynthesis; L-isoleucine from 2-oxobutanoate: step 2/4. The protein operates within amino-acid biosynthesis; L-valine biosynthesis; L-valine from pyruvate: step 2/4. In terms of biological role, involved in the biosynthesis of branched-chain amino acids (BCAA). Catalyzes an alkyl-migration followed by a ketol-acid reduction of (S)-2-acetolactate (S2AL) to yield (R)-2,3-dihydroxy-isovalerate. In the isomerase reaction, S2AL is rearranged via a Mg-dependent methyl migration to produce 3-hydroxy-3-methyl-2-ketobutyrate (HMKB). In the reductase reaction, this 2-ketoacid undergoes a metal-dependent reduction by NADPH to yield (R)-2,3-dihydroxy-isovalerate. This Saccharolobus solfataricus (strain ATCC 35092 / DSM 1617 / JCM 11322 / P2) (Sulfolobus solfataricus) protein is Ketol-acid reductoisomerase (NADP(+)).